Here is a 352-residue protein sequence, read N- to C-terminus: Uroporphyrinogen decarboxylase (352 aa).

Substrate is bound by residues 26–30, aspartate 76, tyrosine 153, serine 208, and histidine 323; that span reads RQAGR.

This sequence belongs to the uroporphyrinogen decarboxylase family. In terms of assembly, homodimer.

It localises to the cytoplasm. It catalyses the reaction uroporphyrinogen III + 4 H(+) = coproporphyrinogen III + 4 CO2. It participates in porphyrin-containing compound metabolism; protoporphyrin-IX biosynthesis; coproporphyrinogen-III from 5-aminolevulinate: step 4/4. Functionally, catalyzes the decarboxylation of four acetate groups of uroporphyrinogen-III to yield coproporphyrinogen-III. This is Uroporphyrinogen decarboxylase from Synechococcus sp. (strain CC9605).